We begin with the raw amino-acid sequence, 66 residues long: Large ribosomal subunit protein bL33c (66 aa).

The protein belongs to the bacterial ribosomal protein bL33 family.

It localises to the plastid. The protein localises to the chloroplast. This chain is Large ribosomal subunit protein bL33c, found in Crucihimalaya wallichii (Rock-cress).